Here is a 617-residue protein sequence, read N- to C-terminus: Dihydroxy-acid dehydratase (617 aa).

Asp-82 is a Mg(2+) binding site. Cys-123 is a [2Fe-2S] cluster binding site. Residues Asp-124 and Lys-125 each coordinate Mg(2+). Position 125 is an N6-carboxylysine (Lys-125). Cys-197 contacts [2Fe-2S] cluster. Residue Glu-497 participates in Mg(2+) binding. Ser-523 acts as the Proton acceptor in catalysis.

It belongs to the IlvD/Edd family. As to quaternary structure, homodimer. Requires [2Fe-2S] cluster as cofactor. Mg(2+) is required as a cofactor.

The enzyme catalyses (2R)-2,3-dihydroxy-3-methylbutanoate = 3-methyl-2-oxobutanoate + H2O. It catalyses the reaction (2R,3R)-2,3-dihydroxy-3-methylpentanoate = (S)-3-methyl-2-oxopentanoate + H2O. The protein operates within amino-acid biosynthesis; L-isoleucine biosynthesis; L-isoleucine from 2-oxobutanoate: step 3/4. It participates in amino-acid biosynthesis; L-valine biosynthesis; L-valine from pyruvate: step 3/4. Functionally, functions in the biosynthesis of branched-chain amino acids. Catalyzes the dehydration of (2R,3R)-2,3-dihydroxy-3-methylpentanoate (2,3-dihydroxy-3-methylvalerate) into 2-oxo-3-methylpentanoate (2-oxo-3-methylvalerate) and of (2R)-2,3-dihydroxy-3-methylbutanoate (2,3-dihydroxyisovalerate) into 2-oxo-3-methylbutanoate (2-oxoisovalerate), the penultimate precursor to L-isoleucine and L-valine, respectively. The sequence is that of Dihydroxy-acid dehydratase from Streptomyces avermitilis (strain ATCC 31267 / DSM 46492 / JCM 5070 / NBRC 14893 / NCIMB 12804 / NRRL 8165 / MA-4680).